Consider the following 299-residue polypeptide: Cycloserine biosynthesis protein DcsG (299 aa).

Residues K92, K137, S144, Q175, P176, and V178 each coordinate ATP. Residues 95–298 (LADLAAHGVP…FAQALAERLK (204 aa)) enclose the ATP-grasp domain. Catalysis depends on residues R220 and R254. Mg(2+) contacts are provided by E269 and E271. The active site involves E271.

As to quaternary structure, monomer. It depends on Mg(2+) as a cofactor.

The catalysed reaction is O-ureido-D-serine + ATP + H2O + H(+) = D-cycloserine + NH4(+) + ADP + phosphate + CO2. Involved in the biosynthesis of the antibiotic D-cycloserine (DCS), a cyclic structural analog of D-alanine, used as an antitubercular agent. Catalyzes the synthesis of D-cycloserine from O-ureido-D-serine (D-OUS). It reacts with D-OUS, D-homocysteine and beta-aminooxy-D-alanine. The protein is Cycloserine biosynthesis protein DcsG of Streptomyces lavendulae.